Here is a 321-residue protein sequence, read N- to C-terminus: Cytochrome f (321 aa).

Positions 1-35 (MQNRNKNNWMKKWVIRSISILIILNIIAWPSISYA) are cleaved as a signal peptide. The heme site is built by Tyr-36, Cys-56, Cys-59, and His-60. Residues 287-306 (IQGLLLFFVSVIMAQILLVL) traverse the membrane as a helical segment.

The protein belongs to the cytochrome f family. The 4 large subunits of the cytochrome b6-f complex are cytochrome b6, subunit IV (17 kDa polypeptide, petD), cytochrome f and the Rieske protein, while the 4 small subunits are PetG, PetL, PetM and PetN. The complex functions as a dimer. The cofactor is heme.

It localises to the plastid. The protein resides in the chloroplast thylakoid membrane. In terms of biological role, component of the cytochrome b6-f complex, which mediates electron transfer between photosystem II (PSII) and photosystem I (PSI), cyclic electron flow around PSI, and state transitions. This chain is Cytochrome f, found in Psilotum nudum (Whisk fern).